The sequence spans 476 residues: uncharacterized protein (476 aa).

A signal peptide spans 1 to 24; sequence MIRKSATGVIVALAVIWGGGTWYT.

To E.coli YdgA and H.influenzae HI_1236.

This is an uncharacterized protein from Escherichia coli (strain K12).